The chain runs to 272 residues: Undecaprenyl-diphosphatase (272 aa).

8 consecutive transmembrane segments (helical) span residues 4–24 (IHSL…EFLP), 45–65 (AETF…VMFW), 89–109 (LTLG…LVFH), 115–135 (LFNP…LIAA), 152–174 (TYRQ…FSRS), 189–209 (YAAS…ATAL), 225–245 (MFAV…KTFL), and 251–271 (ISFI…YVVF).

The protein belongs to the UppP family.

The protein localises to the cell inner membrane. It catalyses the reaction di-trans,octa-cis-undecaprenyl diphosphate + H2O = di-trans,octa-cis-undecaprenyl phosphate + phosphate + H(+). Its function is as follows. Catalyzes the dephosphorylation of undecaprenyl diphosphate (UPP). Confers resistance to bacitracin. This is Undecaprenyl-diphosphatase from Citrobacter koseri (strain ATCC BAA-895 / CDC 4225-83 / SGSC4696).